Consider the following 126-residue polypeptide: Large ribosomal subunit protein uL22 (126 aa).

The protein belongs to the universal ribosomal protein uL22 family. In terms of assembly, part of the 50S ribosomal subunit.

Its function is as follows. This protein binds specifically to 23S rRNA; its binding is stimulated by other ribosomal proteins, e.g. L4, L17, and L20. It is important during the early stages of 50S assembly. It makes multiple contacts with different domains of the 23S rRNA in the assembled 50S subunit and ribosome. The globular domain of the protein is located near the polypeptide exit tunnel on the outside of the subunit, while an extended beta-hairpin is found that lines the wall of the exit tunnel in the center of the 70S ribosome. The polypeptide is Large ribosomal subunit protein uL22 (Jannaschia sp. (strain CCS1)).